Consider the following 274-residue polypeptide: Thiamine kinase (274 aa).

The protein belongs to the thiamine kinase family.

The catalysed reaction is thiamine + ATP = thiamine phosphate + ADP + H(+). Its pathway is cofactor biosynthesis; thiamine diphosphate biosynthesis; thiamine phosphate from thiamine: step 1/1. Catalyzes the ATP-dependent phosphorylation of thiamine to thiamine phosphate. Is involved in thiamine salvage. The chain is Thiamine kinase from Escherichia coli O139:H28 (strain E24377A / ETEC).